The following is a 592-amino-acid chain: Aspartate--tRNA ligase (592 aa).

L-aspartate is bound at residue Glu171. Residues 195 to 198 (QLFK) form an aspartate region. Residue Arg217 coordinates L-aspartate. ATP-binding positions include 217 to 219 (RDE) and Gln226. His448 is a binding site for L-aspartate. Residue Glu482 participates in ATP binding. Residue Arg489 participates in L-aspartate binding. Residue 534 to 537 (GLDR) coordinates ATP.

Belongs to the class-II aminoacyl-tRNA synthetase family. Type 1 subfamily. Homodimer.

Its subcellular location is the cytoplasm. It carries out the reaction tRNA(Asp) + L-aspartate + ATP = L-aspartyl-tRNA(Asp) + AMP + diphosphate. Catalyzes the attachment of L-aspartate to tRNA(Asp) in a two-step reaction: L-aspartate is first activated by ATP to form Asp-AMP and then transferred to the acceptor end of tRNA(Asp). The polypeptide is Aspartate--tRNA ligase (Vibrio atlanticus (strain LGP32) (Vibrio splendidus (strain Mel32))).